The primary structure comprises 276 residues: Large ribosomal subunit protein uL2 (276 aa).

The disordered stretch occupies residues 223 to 276 (GVAMNPVDHPHGGGEGRGKGHHPTSPWGLPTKGYKTRRGKRPSDKFIVRRRNEV). 2 stretches are compositionally biased toward basic and acidic residues: residues 230 to 240 (DHPHGGGEGRG) and 263 to 276 (RPSDKFIVRRRNEV).

This sequence belongs to the universal ribosomal protein uL2 family. In terms of assembly, part of the 50S ribosomal subunit. Forms a bridge to the 30S subunit in the 70S ribosome.

One of the primary rRNA binding proteins. Required for association of the 30S and 50S subunits to form the 70S ribosome, for tRNA binding and peptide bond formation. It has been suggested to have peptidyltransferase activity; this is somewhat controversial. Makes several contacts with the 16S rRNA in the 70S ribosome. This Thermotoga neapolitana (strain ATCC 49049 / DSM 4359 / NBRC 107923 / NS-E) protein is Large ribosomal subunit protein uL2.